The following is a 558-amino-acid chain: Glypican-1 (558 aa).

Residues 1 to 23 (MELRARGWWLLCAAAALVACTRG) form the signal peptide. 7 cysteine pairs are disulfide-bonded: Cys32-Cys68, Cys62-Cys256, Cys69-Cys259, Cys191-Cys343, Cys246-Cys279, Cys268-Cys415, and Cys272-Cys401. 2 N-linked (GlcNAc...) asparagine glycosylation sites follow: Asn79 and Asn116. Positions 478–531 (FQDASDDGSGSGSGGGCPDDACGRRVSKKSSSSRTPLIHALPGLSEQEGQKTSA) are disordered. O-linked (Xyl...) (heparan sulfate) serine glycans are attached at residues Ser486, Ser488, and Ser490. Ser530 carries the GPI-anchor amidated serine lipid modification. The propeptide at 531-558 (AATRPEPHYFFLLFLFTLVLAAARPRWR) is removed in mature form.

Belongs to the glypican family. In terms of processing, S-nitrosylated in a Cu(2+)-dependent manner. Nitric acid (NO) is released from the nitrosylated cysteines by ascorbate or by some other reducing agent, in a Cu(2+) or Zn(2+) dependent manner. This free nitric oxide is then capable of cleaving the heparan sulfate side chains. N- and O-glycosylated. N-glycosylation is mainly of the complex type containing sialic acid. O-glycosylated with heparan sulfate. The heparan sulfate chains can be cleaved either by the action of heparanase or, degraded by a deaminative process that uses nitric oxide (NO) released from the S-nitrosylated cysteines. This process is triggered by ascorbate, or by some other reducing agent, in a Cu(2+)- or Zn(2+) dependent manner. Cu(2+) ions are provided by ceruloproteins such as APP, PRNP or CP which associate with GCP1 in intracellular compartments or lipid rafts. Post-translationally, this cell-associated glypican is further processed to give rise to a medium-released species. As to expression, nervous system.

It is found in the cell membrane. It localises to the endosome. Its subcellular location is the secreted. The protein localises to the extracellular space. Functionally, cell surface proteoglycan that bears heparan sulfate. May act as a catalyst in increasing the rate of conversion of prion protein PRPN(C) to PRNP(Sc) via associating (via the heparan sulfate side chains) with both forms of PRPN, targeting them to lipid rafts and facilitating their interaction. Required for proper skeletal muscle differentiation by sequestering FGF2 in lipid rafts preventing its binding to receptors (FGFRs) and inhibiting the FGF-mediated signaling. Binds Cu(2+) or Zn(2+) ions. Binds, via the heparan sulfate side chains, alpha-4 (V) collagen and participates in Schwann cell myelination. The sequence is that of Glypican-1 (Gpc1) from Rattus norvegicus (Rat).